A 2617-amino-acid polypeptide reads, in one-letter code: Ubiquitin carboxyl-terminal hydrolase 24 (2617 aa).

The UBA domain maps to 3-44 (SEEEQHMTTLLCMGFSDPATIRKALRLAKNDINEAVALLTNE). The disordered stretch occupies residues 45–99 (RPGLDYGGYEPMDSGGPSPGPGGGPRGDSGSDGSGPSRGGSTGGGGGFDPPPAYH). 2 positions are modified to phosphoserine: S62 and S85. Residues 65 to 92 (PGGGPRGDSGSDGSGPSRGGSTGGGGGF) are compositionally biased toward gly residues. Y939 is modified (phosphotyrosine). 2 disordered regions span residues 1030–1056 (KTSGSGTPSGSSADSSTSSSSSSSGAF) and 1127–1148 (LLSETSSQSSKSPSLSSKQQHQ). Composition is skewed to low complexity over residues 1031-1056 (TSGSGTPSGSSADSSTSSSSSSSGAF) and 1128-1148 (LSETSSQSSKSPSLSSKQQHQ). Phosphoserine is present on residues S1138 and S1282. A USP domain is found at 1686–2039 (VGLRNGGATC…NAYMLFYQRV (354 aa)). Residue C1695 is the Nucleophile of the active site. The tract at residues 1920 to 1942 (QDSSSEVGENGRNMDQGGGGSPR) is disordered. S1940 carries the phosphoserine modification. H1967 (proton acceptor) is an active-site residue. Phosphoserine is present on residues S2044, S2074, and S2558. The interval 2060-2087 (AEDLSLSAPSSPEISPQSSPRPHRPNND) is disordered. Over residues 2066 to 2079 (SAPSSPEISPQSSP) the composition is skewed to low complexity. Position 2562 is a phosphothreonine (T2562). Residues 2572–2617 (EKEQSGSSNGSESSPANENGERHLQQGSESPMMIGELRSDLDDVDP) form a disordered region. Residues 2576–2589 (SGSSNGSESSPANE) are compositionally biased toward low complexity. The residue at position 2601 (S2601) is a Phosphoserine. Residues 2608–2617 (LRSDLDDVDP) show a composition bias toward basic and acidic residues.

It belongs to the peptidase C19 family.

The enzyme catalyses Thiol-dependent hydrolysis of ester, thioester, amide, peptide and isopeptide bonds formed by the C-terminal Gly of ubiquitin (a 76-residue protein attached to proteins as an intracellular targeting signal).. Protease that can remove conjugated ubiquitin from target proteins and polyubiquitin chains. Deubiquitinates DDB2, preventing its proteasomal degradation. This is Ubiquitin carboxyl-terminal hydrolase 24 (Usp24) from Mus musculus (Mouse).